Consider the following 1519-residue polypeptide: Putative lipoprotein YghJ (1519 aa).

An N-terminal signal peptide occupies residues 1–23 (MNKKFKYKKSLLAAILSATLLAG). Disordered regions lie at residues 22–107 (AGCD…GATC) and 226–247 (NAAT…TTPG). Cysteine 24 carries the N-palmitoyl cysteine lipid modification. A lipid anchor (S-diacylglycerol cysteine) is attached at cysteine 24. Residues 31–42 (SSSDTPPVDSGT) show a composition bias toward low complexity. Residues 51-77 (DPTPNPEPTPEPTPDPEPTPEPIPDPE) are compositionally biased toward pro residues. Residues 97–107 (GGSQRVTGATC) show a composition bias toward polar residues. Low complexity predominate over residues 234-247 (STHTSPVVPVTTPG). One can recognise a Peptidase M60 domain in the interval 1080–1380 (GNMQSTGLWA…MYAQLKEWAE (301 aa)). The disordered stretch occupies residues 1497–1519 (DLPKPEQGPETINQVTEHKMSAE).

The protein to V.cholerae AcfD (VC_0845).

It is found in the cell membrane. May be a substrate of the type II secretion system beta (T2SS-beta). The polypeptide is Putative lipoprotein YghJ (yghJ) (Escherichia coli O78:H11 (strain H10407 / ETEC)).